A 228-amino-acid polypeptide reads, in one-letter code: Lipoprotein-releasing system ATP-binding protein LolD (228 aa).

One can recognise an ABC transporter domain in the interval phenylalanine 5–tyrosine 228. Glycine 40 to serine 47 contacts ATP.

This sequence belongs to the ABC transporter superfamily. Lipoprotein translocase (TC 3.A.1.125) family. As to quaternary structure, the complex is composed of two ATP-binding proteins (LolD) and two transmembrane proteins (LolC and LolE).

It localises to the cell inner membrane. Its function is as follows. Part of the ABC transporter complex LolCDE involved in the translocation of mature outer membrane-directed lipoproteins, from the inner membrane to the periplasmic chaperone, LolA. Responsible for the formation of the LolA-lipoprotein complex in an ATP-dependent manner. This Ehrlichia ruminantium (strain Gardel) protein is Lipoprotein-releasing system ATP-binding protein LolD.